The following is a 2211-amino-acid chain: Norsolorinic acid synthase stcA (2211 aa).

The segment at 11-251 (FLFGDQTYDF…REIPIYVPAH (241 aa)) is starter unit:ACP transacylase (SAT) domain. Residues 358–378 (PAEPPTSINKTPERYSHRPGS) form a disordered region. Basic and acidic residues predominate over residues 368-378 (TPERYSHRPGS). Positions 380 to 812 (RGKLAIVSMS…GGNTAVLVED (433 aa)) constitute a Ketosynthase family 3 (KS3) domain. Catalysis depends on for beta-ketoacyl synthase activity residues cysteine 552, histidine 687, and histidine 730. The segment at 912–1201 (IACSGQGSQY…MAGMIKTTLD (290 aa)) is malonyl-CoA:ACP transacylase (MAT) domain. The active-site For acyl/malonyl transferase activity is serine 1004. The interval 1289–1316 (TATSDYQLPSDEQVAAKRPSKQDESKEA) is disordered. The interval 1327 to 1468 (HRVVEEKTEP…CTVRFTSEAQ (142 aa)) is N-terminal hotdog fold. The PKS/mFAS DH domain maps to 1327–1643 (HRVVEEKTEP…LRRVPRRGLR (317 aa)). The tract at residues 1340-1643 (TLVVETDISR…LRRVPRRGLR (304 aa)) is product template (PT) domain. Residue histidine 1359 is the Proton acceptor; for dehydratase activity of the active site. The interval 1495–1643 (FIRYTTKSGY…LRRVPRRGLR (149 aa)) is C-terminal hotdog fold. Aspartate 1555 (proton donor; for dehydratase activity) is an active-site residue. The interval 1655–1706 (RLHGNQQAVKTQAPQRAALKQKPQSSPTQPHASKVAYSRSATSPTAGKPVVA) is disordered. Polar residues-rich tracts occupy residues 1658–1668 (GNQQAVKTQAP) and 1676–1685 (KPQSSPTQPH). 2 Carrier domains span residues 1712 to 1791 (REGD…SGSA) and 1839 to 1915 (DELF…GTTS). Serine 1749 and serine 1873 each carry O-(pantetheine 4'-phosphoryl)serine. Residues 1912–1926 (GTTSGSTTGSSGSGS) are compositionally biased toward low complexity. Residues 1912–1947 (GTTSGSTTGSSGSGSSEDETDSIPSTPEEYTTADTR) are disordered. Residues 1934–1945 (IPSTPEEYTTAD) show a composition bias toward polar residues. The segment at 1969-2205 (ILFMLPDGGG…KEHVYLVREL (237 aa)) is thioesterase/Claisen cyclase (TE/CLC) domain. Residue serine 2039 is the For thioesterase activity of the active site.

Pantetheine 4'-phosphate is required as a cofactor.

It carries out the reaction hexanoyl-[ACP] + 7 malonyl-CoA + 6 H(+) = noranthrone + holo-[ACP] + 7 CO2 + 7 CoA + 2 H2O. The protein operates within mycotoxin biosynthesis; sterigmatocystin biosynthesis. In terms of biological role, non-reducing polyketide synthase; part of the gene cluster that mediates the biosynthesis of sterigmatocystin (ST), a polyketide-derived furanocoumarin which is part of the most toxic and carcinogenic compounds among the known mycotoxins. The first step in the biosynthesis of sterigmatocystin is the production of hexanoate by the fatty acid synthase (FAS) units stcJ and stcK. The polyketide backbone is assembled by the non-reducing polyketide synthase stcA by condensation of the starter hexanoyl-CoA and 7 malonyl-CoA extender units followed by cyclization and release of norsolorinic acid. Norsolorinic acid is the first stable intermediate in the biosynthesis of sterigmatocystin and is converted into averantin (AVN) by the ketoreductase stcE which reduces the hexanoate ketone to an alcohol. Averantin is then oxidized into 5'-hydroxyaverantin (HAVN) by the cytochrome P450 monooxygenase stcF. 5'-hydroxyaverantin is further converted to 5'-oxyaverantin (OAVN) by the 5'-hydroxyaverantin dehydrogenase stcG. The next step is the conversion of OAVN into averufin (AVF) which is catalyzed by a yet to be identified enzyme. The cytochrome P450 monooxygenase stcB and the flavin-binding monooxygenase stcW are both required for the conversion of averufin to 1-hydroxyversicolorone. The esterase stcI probably catalyzes the formation of versiconal hemiacetal acetate from 1-hydroxyversicolorone. The oxydoreductase stcN then probably catalyzes the biosynthetic step from versiconal to versicolorin B (VERB). The next step is performed by the versicolorin B desaturase stcL to produce versicolorin A (VERA). The ketoreductase stcU and the cytochrome P450 monooxygenase stcS are involved in the conversion of versicolorin A to demethylsterigmatocystin. The Baeyer-Villiger oxidas stcQ and the reductase stcR might be involved in the biosynthetic step from versicolorin A to demethylsterigmatocystin. The final step in the biosynthesis of sterigmatocystin is the methylation of demethylsterigmatocystin catalyzed by the methyltransferase stcP. The polypeptide is Norsolorinic acid synthase stcA (Emericella nidulans (strain FGSC A4 / ATCC 38163 / CBS 112.46 / NRRL 194 / M139) (Aspergillus nidulans)).